A 222-amino-acid polypeptide reads, in one-letter code: E3 ubiquitin-protein ligase RNF138 (222 aa).

The segment at 17 to 57 adopts an RING-type zinc-finger fold; that stretch reads CPVCQEILQTPVRTQTCRHVFCRKCFMLAMKSGGAYCPLCR. Zn(2+)-binding residues include cysteine 85, cysteine 88, histidine 100, and cysteine 104. Residues 85–104 form a C2HC RNF-type zinc finger; the sequence is CMYCGKMMKLHYMKLHYKSC. 2 consecutive C2H2-type zinc fingers follow at residues 134-157 and 164-192; these read YKCPLCSEHNLNQRSLLEHCNNVH and MVCPICATLPWGDPIQTTGNVIAHLNARH. The UIM domain occupies 202–220; the sequence is INIDEEAQFQIAVANSYKI.

As to quaternary structure, interacts with nlk.2 (via C-terminus) and ube2k. Post-translationally, auto-ubiquitinated.

The protein resides in the chromosome. The enzyme catalyses S-ubiquitinyl-[E2 ubiquitin-conjugating enzyme]-L-cysteine + [acceptor protein]-L-lysine = [E2 ubiquitin-conjugating enzyme]-L-cysteine + N(6)-ubiquitinyl-[acceptor protein]-L-lysine.. Its pathway is protein modification; protein ubiquitination. In terms of biological role, E3 ubiquitin-protein ligase involved in DNA damage response by promoting DNA resection and homologous recombination. Recruited to sites of double-strand breaks following DNA damage and specifically promotes double-strand break repair via homologous recombination. Together with nlk.2, involved in the ubiquitination and degradation of TCF/LEF. Also exhibits auto-ubiquitination activity in combination with ube2k. May act as a negative regulator in the Wnt/beta-catenin-mediated signaling pathway. The protein is E3 ubiquitin-protein ligase RNF138 (rnf138) of Xenopus laevis (African clawed frog).